A 231-amino-acid polypeptide reads, in one-letter code: NDR1/HIN1-like protein 3 (231 aa).

A helical transmembrane segment spans residues 47–67 (VIFNILITIAVLLGIAALIIW). Residues asparagine 102, asparagine 135, asparagine 145, and asparagine 215 are each glycosylated (N-linked (GlcNAc...) asparagine).

As to quaternary structure, may form oligomers or be a component of larger protein complex in plasma membranes. Post-translationally, glycosylated. In terms of tissue distribution, expressed in roots, young and senescing leaves, cauline leaves, stems and siliques.

The protein resides in the cell membrane. In terms of biological role, confers resistance to Pseudomonas syringae pv. tomato DC3000 (Pst DC3000). This chain is NDR1/HIN1-like protein 3, found in Arabidopsis thaliana (Mouse-ear cress).